Consider the following 106-residue polypeptide: ATP-dependent Clp protease adapter protein ClpS (106 aa).

The protein belongs to the ClpS family. In terms of assembly, binds to the N-terminal domain of the chaperone ClpA.

Involved in the modulation of the specificity of the ClpAP-mediated ATP-dependent protein degradation. In Cronobacter sakazakii (strain ATCC BAA-894) (Enterobacter sakazakii), this protein is ATP-dependent Clp protease adapter protein ClpS.